The primary structure comprises 802 residues: Chondroitin sulfate synthase 1 (802 aa).

Over 1–7 the chain is Cytoplasmic; that stretch reads MAARGRR. A helical; Signal-anchor for type II membrane protein membrane pass occupies residues 8–28; sequence AWLSVLLGLVLGFVLASRLVL. Residues 29-802 are Lumenal-facing; that stretch reads PRASELKRAG…SNNNGSVRTA (774 aa). Positions 34–82 are disordered; sequence LKRAGPRRRASPEGCRSGQAAASQAGGARGDARGAQLWPPGSDPDGGPR. 2 stretches are compositionally biased toward low complexity: residues 49-59 and 66-78; these read RSGQAAASQAG and RGAQ…SDPD. Residues Asn189 and Asn623 are each glycosylated (N-linked (GlcNAc...) asparagine). Asp633 and His747 together coordinate a divalent metal cation. Asn796 is a glycosylation site (N-linked (GlcNAc...) asparagine).

This sequence belongs to the chondroitin N-acetylgalactosaminyltransferase family. Co(2+) serves as cofactor. Mn(2+) is required as a cofactor. It depends on Cd(2+) as a cofactor. In terms of tissue distribution, ubiquitous, with the highest levels in placenta. Detected at low levels in brain, heart, skeletal muscle, colon, thymus, spleen, kidney, liver, adrenal gland, mammary gland, stomach, small intestine, lung and peripheral blood leukocytes.

The protein localises to the golgi apparatus. It is found in the golgi stack membrane. Its subcellular location is the secreted. The catalysed reaction is 3-O-(beta-D-GlcA-(1-&gt;3)-beta-D-GalNAc-(1-&gt;4)-beta-D-GlcA-(1-&gt;3)-beta-D-Gal-(1-&gt;3)-beta-D-Gal-(1-&gt;4)-beta-D-Xyl)-L-seryl-[protein] + UDP-N-acetyl-alpha-D-galactosamine = 3-O-(beta-D-GalNAc-(1-&gt;4)-beta-D-GlcA-(1-&gt;3)-beta-D-GalNAc-(1-&gt;4)-beta-D-GlcA-(1-&gt;3)-beta-D-Gal-(1-&gt;3)-beta-D-Gal-(1-&gt;4)-beta-D-Xyl)-L-seryl-[protein] + UDP + H(+). It carries out the reaction 3-O-{beta-D-GlcA-(1-&gt;3)-[beta-D-GalNAc-(1-&gt;4)-beta-D-GlcA-(1-&gt;3)](n)-beta-D-GalNAc-(1-&gt;4)-beta-D-GlcA-(1-&gt;3)-beta-D-Gal-(1-&gt;3)-beta-D-Gal-(1-&gt;4)-beta-D-Xyl}-L-seryl-[protein] + UDP-N-acetyl-alpha-D-galactosamine = 3-O-{[beta-D-GalNAc-(1-&gt;4)-beta-D-GlcA-(1-&gt;3)](n+1)-beta-D-GalNAc-(1-&gt;4)-beta-D-GlcA-(1-&gt;3)-beta-D-Gal-(1-&gt;3)-beta-D-Gal-(1-&gt;4)-beta-D-Xyl}-L-seryl-[protein] + UDP + H(+). It catalyses the reaction 3-O-(beta-D-GalNAc-(1-&gt;4)-beta-D-GlcA-(1-&gt;3)-beta-D-Gal-(1-&gt;3)-beta-D-Gal-(1-&gt;4)-beta-D-Xyl)-L-seryl-[protein] + UDP-alpha-D-glucuronate = 3-O-(beta-D-GlcA-(1-&gt;3)-beta-D-GalNAc-(1-&gt;4)-beta-D-GlcA-(1-&gt;3)-beta-D-Gal-(1-&gt;3)-beta-D-Gal-(1-&gt;4)-beta-D-Xyl)-L-seryl-[protein] + UDP + H(+). The enzyme catalyses 3-O-{[beta-D-GalNAc-(1-&gt;4)-beta-D-GlcA-(1-&gt;3)](n)-beta-D-GalNAc-(1-&gt;4)-beta-D-GlcA-(1-&gt;3)-beta-D-Gal-(1-&gt;3)-beta-D-Gal-(1-&gt;4)-beta-D-Xyl}-L-seryl-[protein] + UDP-alpha-D-glucuronate = 3-O-{beta-D-GlcA-(1-&gt;3)-[beta-D-GalNAc-(1-&gt;4)-beta-D-GlcA-(1-&gt;3)](n)-beta-D-GalNAc-(1-&gt;4)-beta-D-GlcA-(1-&gt;3)-beta-D-Gal-(1-&gt;3)-beta-D-Gal-(1-&gt;4)-beta-D-Xyl}-L-seryl-[protein] + UDP + H(+). Functionally, has both beta-1,3-glucuronic acid and beta-1,4-N-acetylgalactosamine transferase activity. Transfers glucuronic acid (GlcUA) from UDP-GlcUA and N-acetylgalactosamine (GalNAc) from UDP-GalNAc to the non-reducing end of the elongating chondroitin polymer. Involved in the negative control of osteogenesis likely through the modulation of NOTCH signaling. This chain is Chondroitin sulfate synthase 1, found in Homo sapiens (Human).